The chain runs to 631 residues: Clathrin interactor 1 (631 aa).

Residues 24–157 (NVVMNYSEIE…QDDDRLREER (134 aa)) form the ENTH domain. Arg-37 lines the a 1,2-diacyl-sn-glycero-3-phospho-(1D-myo-inositol-4,5-bisphosphate) pocket. An interaction with VTI1B region spans residues 60–62 (FMY). Arg-75 is an a 1,2-diacyl-sn-glycero-3-phospho-(1D-myo-inositol-4,5-bisphosphate) binding site. Interaction with VTI1B stretches follow at residues 102 to 104 (SER) and 150 to 161 (DDRLREERKKAK). Phosphoserine occurs at positions 171, 174, 213, 218, 235, 253, and 307. The segment at 227-339 (FRRKDREDSP…SSGDLVDLFD (113 aa)) is disordered. A compositionally biased stretch (basic and acidic residues) spans 230–247 (KDREDSPERCSDSDEEKK). The span at 308 to 318 (PDQNASTHTPQ) shows a compositional bias: polar residues. Thr-316 carries the phosphothreonine modification. Over residues 319–331 (SSAKPSVPSSKSS) the composition is skewed to low complexity. Phosphoserine occurs at positions 320 and 630.

The protein belongs to the epsin family. As to quaternary structure, binds clathrin heavy chain and AP-2. Interacts with VTI1B. Interacts with GGA2 (via GAE domain). Interacts with AP1G1 (via GAE domain). Interacts with AP1G2 (via GAE domain).

It is found in the cytoplasm. It localises to the perinuclear region. The protein resides in the membrane. The protein localises to the cytoplasmic vesicle. Its subcellular location is the clathrin-coated vesicle. In terms of biological role, binds to membranes enriched in phosphatidylinositol 4,5-bisphosphate (PtdIns(4,5)P2). May have a role in transport via clathrin-coated vesicles from the trans-Golgi network to endosomes. Stimulates clathrin assembly. The protein is Clathrin interactor 1 (Clint1) of Mus musculus (Mouse).